Reading from the N-terminus, the 346-residue chain is 2,5-dichlorohydroquinone reductive dechlorinase (346 aa).

Positions 43–154 (PRFELFHFVF…YLCDALSGGT (112 aa)) constitute a GST N-terminal domain. The GST C-terminal domain occupies 189–335 (DRRPESMQAV…AIIQWPGHPP (147 aa)).

Belongs to the GST superfamily.

The catalysed reaction is 2,5-dichlorohydroquinone + 2 glutathione = chlorohydroquinone + glutathione disulfide + chloride + H(+). It catalyses the reaction chlorohydroquinone + 2 glutathione = hydroquinone + glutathione disulfide + chloride + H(+). Its pathway is xenobiotic degradation; gamma-hexachlorocyclohexane degradation. Functionally, catalyzes the degradation of 2,5-dichlorohydroquinone (2,5-DCHQ) into hydroquinone (HQ) via chlorohydroquinone (CHQ). Is involved in the degradation pathway that allows S.japonicum UT26 to grow on gamma-hexachlorocyclohexane (gamma-HCH or lindane) as the sole source of carbon and energy. However, the conversion of CHQ to HQ by LinD seems not to be essential for this degradation pathway, because the conversion rate of CHQ to HQ is much lower than that of 2,5-DCHQ to CHQ. CHQ is more efficiently degraded by LinE in strain UT26. The sequence is that of 2,5-dichlorohydroquinone reductive dechlorinase from Sphingobium indicum (strain DSM 16413 / CCM 7287 / MTCC 6362 / UT26 / NBRC 101211 / UT26S) (Sphingobium japonicum).